Here is a 157-residue protein sequence, read N- to C-terminus: Protein Smg homolog (157 aa).

The protein belongs to the Smg family.

This chain is Protein Smg homolog, found in Alkalilimnicola ehrlichii (strain ATCC BAA-1101 / DSM 17681 / MLHE-1).